A 109-amino-acid chain; its full sequence is uncharacterized protein (109 aa).

It to A.calcoaceticus putative ferredoxin.

This is an uncharacterized protein from Escherichia coli O157:H7.